Reading from the N-terminus, the 304-residue chain is Protein Largen (304 aa).

Residues 1–22 (MSAKSKGNPSSSSAAEGPPAAS) show a composition bias toward low complexity. 4 disordered regions span residues 1–27 (MSAKSKGNPSSSSAAEGPPAASKTKVK), 66–109 (QLED…PPAH), 114–133 (LTVLRKPNPPPPPPRLTPVR), and 236–304 (EPVH…TTTV). The stretch at 33–70 (IVEDLELVLGDLKDVAKELKEVVDQIDTLTSDLQLEDE) forms a coiled coil. Residues 77–91 (TDTLNSSSSGTTASS) are compositionally biased toward low complexity. 2 stretches are compositionally biased toward pro residues: residues 120 to 129 (PNPPPPPPRL) and 275 to 289 (FPPPTPATVPPPAAP).

Regulator of cell size that promotes cell size increase independently of mTOR and Hippo signaling pathways. Acts by stimulating the translation of specific mRNAs, including those encoding proteins affecting mitochondrial functions. Increases mitochondrial mass and respiration. In Mus musculus (Mouse), this protein is Protein Largen (Prr16).